A 274-amino-acid polypeptide reads, in one-letter code: Lectizyme (274 aa).

The signal sequence occupies residues 1 to 16; that stretch reads MKFFAVFALCVASVSA. The Peptidase S1 domain maps to 32–268; that stretch reads IINGHEAEKG…FDKWIEDSIE (237 aa). Cys57 and Cys73 form a disulfide bridge. Catalysis depends on charge relay system residues His72 and Asp119. 2 disulfides stabilise this stretch: Cys188–Cys204 and Cys215–Cys244. Ser219 serves as the catalytic Charge relay system.

Belongs to the peptidase S1 family. In terms of tissue distribution, expressed in the midgut.

The protein localises to the secreted. Its function is as follows. Protein with lectin and protease activity involved in the establishment of trypanosome infections in tsetse flies. Binds D-glucosamine and agglutinates bloodstream-form trypanosomes and rabbit red blood cells. Capable of inducing transformation of bloodstream-form trypanosomes into procyclic (midgut) forms in vitro. The protein is Lectizyme (Gpl) of Glossina austeni (Savannah tsetse fly).